A 122-amino-acid chain; its full sequence is Large ribosomal subunit protein uL14 (122 aa).

The protein belongs to the universal ribosomal protein uL14 family. In terms of assembly, part of the 50S ribosomal subunit. Forms a cluster with proteins L3 and L19. In the 70S ribosome, L14 and L19 interact and together make contacts with the 16S rRNA in bridges B5 and B8.

Its function is as follows. Binds to 23S rRNA. Forms part of two intersubunit bridges in the 70S ribosome. This Parvibaculum lavamentivorans (strain DS-1 / DSM 13023 / NCIMB 13966) protein is Large ribosomal subunit protein uL14.